The primary structure comprises 940 residues: UvrABC system protein A (940 aa).

Residue 31–38 (GLSGSGKS) participates in ATP binding. The C4-type zinc finger occupies 252 to 279 (CPHCGYSMRELEPRLFSFNNPAGACPTC). ABC transporter domains follow at residues 309–586 (WDQK…PNSL) and 606–936 (KDAK…RFLK). Residue 639 to 646 (GVSGSGKS) coordinates ATP. A C4-type zinc finger spans residues 739–765 (CEACQGDGVIKVEMHFLPDVYVPCDVC).

The protein belongs to the ABC transporter superfamily. UvrA family. Forms a heterotetramer with UvrB during the search for lesions.

It is found in the cytoplasm. In terms of biological role, the UvrABC repair system catalyzes the recognition and processing of DNA lesions. UvrA is an ATPase and a DNA-binding protein. A damage recognition complex composed of 2 UvrA and 2 UvrB subunits scans DNA for abnormalities. When the presence of a lesion has been verified by UvrB, the UvrA molecules dissociate. This chain is UvrABC system protein A, found in Vibrio cholerae serotype O1 (strain ATCC 39315 / El Tor Inaba N16961).